The sequence spans 333 residues: Beta-ketoacyl-[acyl-carrier-protein] synthase III (333 aa).

Active-site residues include cysteine 116 and histidine 258. The segment at 259–263 (QANKR) is ACP-binding. Residue asparagine 288 is part of the active site.

Belongs to the thiolase-like superfamily. FabH family. Homodimer.

It is found in the cytoplasm. The catalysed reaction is malonyl-[ACP] + acetyl-CoA + H(+) = 3-oxobutanoyl-[ACP] + CO2 + CoA. It functions in the pathway lipid metabolism; fatty acid biosynthesis. Its function is as follows. Catalyzes the condensation reaction of fatty acid synthesis by the addition to an acyl acceptor of two carbons from malonyl-ACP. Catalyzes the first condensation reaction which initiates fatty acid synthesis and may therefore play a role in governing the total rate of fatty acid production. Possesses both acetoacetyl-ACP synthase and acetyl transacylase activities. Its substrate specificity determines the biosynthesis of branched-chain and/or straight-chain of fatty acids. The polypeptide is Beta-ketoacyl-[acyl-carrier-protein] synthase III (Koribacter versatilis (strain Ellin345)).